The chain runs to 212 residues: Ribosomal RNA large subunit methyltransferase E (212 aa).

The disordered stretch occupies residues 1–26; that stretch reads MPAERPSVSQKPKNPYKRPDAFTKAA. Residues G63, W65, D83, D101, and D122 each coordinate S-adenosyl-L-methionine. Residue K162 is the Proton acceptor of the active site.

It belongs to the class I-like SAM-binding methyltransferase superfamily. RNA methyltransferase RlmE family.

The protein resides in the cytoplasm. The enzyme catalyses uridine(2552) in 23S rRNA + S-adenosyl-L-methionine = 2'-O-methyluridine(2552) in 23S rRNA + S-adenosyl-L-homocysteine + H(+). In terms of biological role, specifically methylates the uridine in position 2552 of 23S rRNA at the 2'-O position of the ribose in the fully assembled 50S ribosomal subunit. The protein is Ribosomal RNA large subunit methyltransferase E of Sorangium cellulosum (strain So ce56) (Polyangium cellulosum (strain So ce56)).